A 120-amino-acid polypeptide reads, in one-letter code: Cytochrome c oxidase subunit 5 (120 aa).

The residue at position 2 (Ser-2) is a Blocked amino end (Ser). 4 residues coordinate Zn(2+): Cys-76, His-84, Cys-99, and Cys-102.

This sequence belongs to the cytochrome c oxidase subunit 5B family. As to quaternary structure, component of the cytochrome c oxidase (complex IV, CIV), a multisubunit enzyme composed of a catalytic core of 3 subunits and several supernumerary subunits. The complex exists as a monomer or a dimer and forms supercomplexes (SCs) in the inner mitochondrial membrane with ubiquinol-cytochrome c oxidoreductase (cytochrome b-c1 complex, complex III, CIII). Slime mold cytochrome c oxidase consists of at least seven different polypeptides species, subunits I, II, III, IV, V, VI, and VIIe/s in order of MW.

Its subcellular location is the mitochondrion inner membrane. The protein operates within energy metabolism; oxidative phosphorylation. In terms of biological role, component of the cytochrome c oxidase, the last enzyme in the mitochondrial electron transport chain which drives oxidative phosphorylation. The respiratory chain contains 3 multisubunit complexes succinate dehydrogenase (complex II, CII), ubiquinol-cytochrome c oxidoreductase (cytochrome b-c1 complex, complex III, CIII) and cytochrome c oxidase (complex IV, CIV), that cooperate to transfer electrons derived from NADH and succinate to molecular oxygen, creating an electrochemical gradient over the inner membrane that drives transmembrane transport and the ATP synthase. Cytochrome c oxidase is the component of the respiratory chain that catalyzes the reduction of oxygen to water. Electrons originating from reduced cytochrome c in the intermembrane space (IMS) are transferred via the dinuclear copper A center (CU(A)) of subunit 2 and heme A of subunit 1 to the active site in subunit 1, a binuclear center (BNC) formed by heme A3 and copper B (CU(B)). The BNC reduces molecular oxygen to 2 water molecules using 4 electrons from cytochrome c in the IMS and 4 protons from the mitochondrial matrix. This is Cytochrome c oxidase subunit 5 (cxeA) from Dictyostelium discoideum (Social amoeba).